We begin with the raw amino-acid sequence, 486 residues long: Ammonium transporter 2 member 1 (486 aa).

Transmembrane regions (helical) follow at residues 29-49 (ASTL…GSIV), 57-77 (SAFM…LVGF), 127-147 (LVLF…GSVL), 161-181 (LWLL…GFLY), 190-210 (GGYV…YWVG), 225-245 (ILLM…FNGG), 252-272 (IAAS…LLMW), 285-305 (VIGA…GAGL), 309-329 (WAAV…MMIL), 343-363 (LAVF…TGLL), and 399-419 (FVIA…GLFI). Residues 454 to 470 (RHDLSRGGGGGDRDGPA) are compositionally biased toward basic and acidic residues. A disordered region spans residues 454 to 473 (RHDLSRGGGGGDRDGPAGER).

It belongs to the ammonia transporter channel (TC 1.A.11.2) family. In terms of tissue distribution, expressed in roots and leaf blades and sheaths.

The protein resides in the cell membrane. Its function is as follows. Involved in ammonium transport. This chain is Ammonium transporter 2 member 1 (AMT2-1), found in Oryza sativa subsp. japonica (Rice).